A 439-amino-acid chain; its full sequence is MESSIEKLEGLAHKLTVEIPAGDIDQAVTQRLKSLRPRLRIDGFRPGKVPPHIIKQRYGISARQDVLGDEIDRSYREIISKSDYAPVAPPQIELISGFKEGEALKFEAIFEVMPEVVVNGLDALDITLPDAQLSDKDVDEMIDTLRRQRANFVESDKIAGNGDRLTLDFIGTLNGEPFEGGKGEDFCFNLGSGQMLPDFERGLQGMKAGEEKSFDVQFPEDYPSENLAGKTAQFAATLKKVEAMILPEVDESFIKAFGIASGDAADFRRAIRDNMSRELEKAKRRIKRERLFDAILEKNADQIVPNASLHQEMERMAKEFNLEKQIPDTEKRHQLMHQLFEKNAKRRIQLGLLLGKLFDERQIEIDQSRVQERLESIAATYEDPEEVKKWYQNDEKSRRDLEAVILEEQLIDQLYEKAKVSYETRSFQEIMAVNAQIHG.

The region spanning 162-247 (GDRLTLDFIG…LKKVEAMILP (86 aa)) is the PPIase FKBP-type domain.

The protein belongs to the FKBP-type PPIase family. Tig subfamily.

The protein resides in the cytoplasm. It carries out the reaction [protein]-peptidylproline (omega=180) = [protein]-peptidylproline (omega=0). Involved in protein export. Acts as a chaperone by maintaining the newly synthesized protein in an open conformation. Functions as a peptidyl-prolyl cis-trans isomerase. The protein is Trigger factor of Dichelobacter nodosus (strain VCS1703A).